A 734-amino-acid polypeptide reads, in one-letter code: Photosystem I P700 chlorophyll a apoprotein A2 (734 aa).

Transmembrane regions (helical) follow at residues 46 to 69 (IFASHFGQLAIIFLWTSGNLFHVA), 135 to 158 (LYTGALFLLFLSAVSLIAGWLHLQ), 175 to 199 (LNHHLSGLFGVSSLAWTGHLVHVAI), 273 to 291 (IAHHHLAIALIFLVAGHMY), 330 to 353 (VHFQLGLALASLGVITSLVAQHMY), 369 to 395 (AALYTHHQYIAGFIMTGAFAHGAIFFI), 417 to 439 (AIISHLSWASLFLGFHTLGLYVH), and 517 to 535 (FLVHHAIALGLHTTTLILV). [4Fe-4S] cluster contacts are provided by Cys-559 and Cys-568. The next 2 membrane-spanning stretches (helical) occupy residues 575-596 (AFYLAVFWMLNTIGWVTFYWHW) and 643-665 (LSVWAWMFLFGHLVWATGFMFLI). The chlorophyll a site is built by His-654, Met-662, and Tyr-670. Residue Trp-671 participates in phylloquinone binding. The chain crosses the membrane as a helical span at residues 707–727 (LVGLAHFSVGYIFTYAAFLIA).

The protein belongs to the PsaA/PsaB family. The PsaA/B heterodimer binds the P700 chlorophyll special pair and subsequent electron acceptors. PSI consists of a core antenna complex that captures photons, and an electron transfer chain that converts photonic excitation into a charge separation. The eukaryotic PSI reaction center is composed of at least 11 subunits. P700 is a chlorophyll a/chlorophyll a' dimer, A0 is one or more chlorophyll a, A1 is one or both phylloquinones and FX is a shared 4Fe-4S iron-sulfur center. is required as a cofactor.

The protein localises to the plastid. The protein resides in the chloroplast thylakoid membrane. The enzyme catalyses reduced [plastocyanin] + hnu + oxidized [2Fe-2S]-[ferredoxin] = oxidized [plastocyanin] + reduced [2Fe-2S]-[ferredoxin]. In terms of biological role, psaA and PsaB bind P700, the primary electron donor of photosystem I (PSI), as well as the electron acceptors A0, A1 and FX. PSI is a plastocyanin-ferredoxin oxidoreductase, converting photonic excitation into a charge separation, which transfers an electron from the donor P700 chlorophyll pair to the spectroscopically characterized acceptors A0, A1, FX, FA and FB in turn. Oxidized P700 is reduced on the lumenal side of the thylakoid membrane by plastocyanin. This Platanus occidentalis (Sycamore) protein is Photosystem I P700 chlorophyll a apoprotein A2.